Reading from the N-terminus, the 399-residue chain is DNA primase DnaG (399 aa).

A Toprim domain is found at 182–268 (DAIIVVEGRA…EVEDLTQKEI (87 aa)). Mg(2+) contacts are provided by E188, D230, and D232.

It belongs to the archaeal DnaG primase family. Forms a ternary complex with MCM helicase and DNA. Component of the archaeal exosome complex. Requires Mg(2+) as cofactor.

It carries out the reaction ssDNA + n NTP = ssDNA/pppN(pN)n-1 hybrid + (n-1) diphosphate.. RNA polymerase that catalyzes the synthesis of short RNA molecules used as primers for DNA polymerase during DNA replication. Also part of the exosome, which is a complex involved in RNA degradation. Acts as a poly(A)-binding protein that enhances the interaction between heteromeric, adenine-rich transcripts and the exosome. In Archaeoglobus fulgidus (strain ATCC 49558 / DSM 4304 / JCM 9628 / NBRC 100126 / VC-16), this protein is DNA primase DnaG.